Consider the following 58-residue polypeptide: Small ribosomal subunit protein bS21 (58 aa).

It belongs to the bacterial ribosomal protein bS21 family.

The polypeptide is Small ribosomal subunit protein bS21 (Lacticaseibacillus paracasei (strain ATCC 334 / BCRC 17002 / CCUG 31169 / CIP 107868 / KCTC 3260 / NRRL B-441) (Lactobacillus paracasei)).